A 70-amino-acid polypeptide reads, in one-letter code: uncharacterized protein (70 aa).

It belongs to the opacity porin family.

This is an uncharacterized protein from Haemophilus influenzae (strain ATCC 51907 / DSM 11121 / KW20 / Rd).